The chain runs to 113 residues: T cell receptor alpha variable 8-6 (113 aa).

The signal sequence occupies residues 1-20 (MLLLLVPAFQVIFTLGGTRA). The 93-residue stretch at 21-113 (QSVTQLDSQV…DTAEYFCAVS (93 aa)) folds into the Ig-like domain. The cysteines at positions 42 and 110 are disulfide-linked. N-linked (GlcNAc...) asparagine glycosylation is found at asparagine 43 and asparagine 87.

Alpha-beta TR is a heterodimer composed of an alpha and beta chain; disulfide-linked. The alpha-beta TR is associated with the transmembrane signaling CD3 coreceptor proteins to form the TR-CD3 (TcR or TCR). The assembly of alpha-beta TR heterodimers with CD3 occurs in the endoplasmic reticulum where a single alpha-beta TR heterodimer associates with one CD3D-CD3E heterodimer, one CD3G-CD3E heterodimer and one CD247 homodimer forming a stable octameric structure. CD3D-CD3E and CD3G-CD3E heterodimers preferentially associate with TR alpha and TR beta chains, respectively. The association of the CD247 homodimer is the last step of TcR assembly in the endoplasmic reticulum and is required for transport to the cell surface.

The protein localises to the cell membrane. Its function is as follows. V region of the variable domain of T cell receptor (TR) alpha chain that participates in the antigen recognition. Alpha-beta T cell receptors are antigen specific receptors which are essential to the immune response and are present on the cell surface of T lymphocytes. Recognize peptide-major histocompatibility (MH) (pMH) complexes that are displayed by antigen presenting cells (APC), a prerequisite for efficient T cell adaptive immunity against pathogens. Binding of alpha-beta TR to pMH complex initiates TR-CD3 clustering on the cell surface and intracellular activation of LCK that phosphorylates the ITAM motifs of CD3G, CD3D, CD3E and CD247 enabling the recruitment of ZAP70. In turn ZAP70 phosphorylates LAT, which recruits numerous signaling molecules to form the LAT signalosome. The LAT signalosome propagates signal branching to three major signaling pathways, the calcium, the mitogen-activated protein kinase (MAPK) kinase and the nuclear factor NF-kappa-B (NF-kB) pathways, leading to the mobilization of transcription factors that are critical for gene expression and essential for T cell growth and differentiation. The T cell repertoire is generated in the thymus, by V-(D)-J rearrangement. This repertoire is then shaped by intrathymic selection events to generate a peripheral T cell pool of self-MH restricted, non-autoaggressive T cells. Post-thymic interaction of alpha-beta TR with the pMH complexes shapes TR structural and functional avidity. The protein is T cell receptor alpha variable 8-6 of Homo sapiens (Human).